Reading from the N-terminus, the 597-residue chain is Gamma-terpinene synthase, chloroplastic (597 aa).

Residues 1–47 constitute a chloroplast transit peptide; sequence MATLSMQVSILSKQVKNLNSFGMRASKLPMVARRVDVSTTRLRPICS. The Mn(2+) site is built by Asp350 and Asp354. Residues 350–354 carry the DDXXD motif motif; sequence DDVYD. Homodimerization regions lie at residues 356–362 and 428–464; these read YGTLDEL and EAKW…YFTL. Positions 494 and 502 each coordinate Mn(2+).

It belongs to the terpene synthase family. Homodimer. The cofactor is Mn(2+). Requires Mg(2+) as cofactor.

Its subcellular location is the plastid. It is found in the chloroplast. It catalyses the reaction (2E)-geranyl diphosphate = gamma-terpinene + diphosphate. The protein operates within secondary metabolite biosynthesis; terpenoid biosynthesis. In terms of biological role, involved in the biosynthesis of phenolic monoterpenes natural products thymol and carvacrol which have a broad range of biological activities acting as antimicrobial compounds, insecticides, antioxidants and pharmaceutical agents. Monoterpene synthase which catalyzes the conversion of geranyl diphosphate (GPP) to gamma-terpinene. This Thymus caespititius (Cretan thyme) protein is Gamma-terpinene synthase, chloroplastic.